The primary structure comprises 35 residues: Photosystem II reaction center protein T (35 aa).

Residues 3–23 (ALVYTFLLVSTLGIIFFAIFF) form a helical membrane-spanning segment.

It belongs to the PsbT family. As to quaternary structure, PSII is composed of 1 copy each of membrane proteins PsbA, PsbB, PsbC, PsbD, PsbE, PsbF, PsbH, PsbI, PsbJ, PsbK, PsbL, PsbM, PsbT, PsbY, PsbZ, Psb30/Ycf12, at least 3 peripheral proteins of the oxygen-evolving complex and a large number of cofactors. It forms dimeric complexes.

The protein resides in the plastid. Its subcellular location is the chloroplast thylakoid membrane. Functionally, found at the monomer-monomer interface of the photosystem II (PS II) dimer, plays a role in assembly and dimerization of PSII. PSII is a light-driven water plastoquinone oxidoreductase, using light energy to abstract electrons from H(2)O, generating a proton gradient subsequently used for ATP formation. The chain is Photosystem II reaction center protein T from Stangeria eriopus (Natal grass cycad).